Reading from the N-terminus, the 534-residue chain is Probable RNA-binding protein 46 (534 aa).

RRM domains follow at residues 61 to 139 (CEVF…VSLD), 141 to 223 (CRLF…WASP), and 236 to 308 (KVLY…LAKP).

The protein localises to the cytoplasm. Its function is as follows. Essential for male and female fertility, playing a crucial role in regulating germ cell development by ensuring the proper progression of meiosis prophase I. The protein is Probable RNA-binding protein 46 (rbm46) of Xenopus tropicalis (Western clawed frog).